The primary structure comprises 173 residues: Acireductone dioxygenase (173 aa).

Residues 1-21 (MKFYYHDNDSSVDQCAPHDSG) are disordered. 4 residues coordinate Fe(2+): H84, H86, E90, and H129. Residues H84, H86, E90, and H129 each coordinate Ni(2+).

Belongs to the acireductone dioxygenase (ARD) family. The cofactor is Fe(2+). Ni(2+) is required as a cofactor.

The protein localises to the cytoplasm. It is found in the nucleus. It carries out the reaction 1,2-dihydroxy-5-(methylsulfanyl)pent-1-en-3-one + O2 = 4-methylsulfanyl-2-oxobutanoate + formate + 2 H(+). The enzyme catalyses 1,2-dihydroxy-5-(methylsulfanyl)pent-1-en-3-one + O2 = 3-(methylsulfanyl)propanoate + CO + formate + 2 H(+). It participates in amino-acid biosynthesis; L-methionine biosynthesis via salvage pathway; L-methionine from S-methyl-5-thio-alpha-D-ribose 1-phosphate: step 5/6. Functionally, catalyzes 2 different reactions between oxygen and the acireductone 1,2-dihydroxy-3-keto-5-methylthiopentene (DHK-MTPene) depending upon the metal bound in the active site. Fe-containing acireductone dioxygenase (Fe-ARD) produces formate and 2-keto-4-methylthiobutyrate (KMTB), the alpha-ketoacid precursor of methionine in the methionine recycle pathway. Ni-containing acireductone dioxygenase (Ni-ARD) produces methylthiopropionate, carbon monoxide and formate, and does not lie on the methionine recycle pathway. In Yarrowia lipolytica (strain CLIB 122 / E 150) (Yeast), this protein is Acireductone dioxygenase.